The chain runs to 196 residues: Imidazoleglycerol-phosphate dehydratase (196 aa).

This sequence belongs to the imidazoleglycerol-phosphate dehydratase family.

The protein localises to the cytoplasm. The catalysed reaction is D-erythro-1-(imidazol-4-yl)glycerol 3-phosphate = 3-(imidazol-4-yl)-2-oxopropyl phosphate + H2O. The protein operates within amino-acid biosynthesis; L-histidine biosynthesis; L-histidine from 5-phospho-alpha-D-ribose 1-diphosphate: step 6/9. In Nitratidesulfovibrio vulgaris (strain DSM 19637 / Miyazaki F) (Desulfovibrio vulgaris), this protein is Imidazoleglycerol-phosphate dehydratase.